The sequence spans 206 residues: Urease accessory protein UreG (206 aa).

14–21 contacts GTP; that stretch reads GPVGSGKT.

It belongs to the SIMIBI class G3E GTPase family. UreG subfamily. As to quaternary structure, homodimer. UreD, UreF and UreG form a complex that acts as a GTP-hydrolysis-dependent molecular chaperone, activating the urease apoprotein by helping to assemble the nickel containing metallocenter of UreC. The UreE protein probably delivers the nickel.

The protein localises to the cytoplasm. Functionally, facilitates the functional incorporation of the urease nickel metallocenter. This process requires GTP hydrolysis, probably effectuated by UreG. In Methylocella silvestris (strain DSM 15510 / CIP 108128 / LMG 27833 / NCIMB 13906 / BL2), this protein is Urease accessory protein UreG.